A 345-amino-acid polypeptide reads, in one-letter code: Eukaryotic translation initiation factor 3 subunit F (345 aa).

Positions 30 to 166 constitute an MPN domain; it reads VVIQPQAIFS…TRAYISAPVG (137 aa). A disordered region spans residues 310–345; it reads EGASAEAGAQRGQRGGRGGRGGQQRTQERASEEVRA. Low complexity predominate over residues 312 to 321; sequence ASAEAGAQRG. The segment covering 322–331 has biased composition (gly residues); that stretch reads QRGGRGGRGG. A compositionally biased stretch (basic and acidic residues) spans 335-345; sequence TQERASEEVRA.

The protein belongs to the eIF-3 subunit F family. In terms of assembly, component of the eukaryotic translation initiation factor 3 (eIF-3) complex.

It is found in the cytoplasm. In terms of biological role, component of the eukaryotic translation initiation factor 3 (eIF-3) complex, which is involved in protein synthesis of a specialized repertoire of mRNAs and, together with other initiation factors, stimulates binding of mRNA and methionyl-tRNAi to the 40S ribosome. The eIF-3 complex specifically targets and initiates translation of a subset of mRNAs involved in cell proliferation. In Neosartorya fischeri (strain ATCC 1020 / DSM 3700 / CBS 544.65 / FGSC A1164 / JCM 1740 / NRRL 181 / WB 181) (Aspergillus fischerianus), this protein is Eukaryotic translation initiation factor 3 subunit F.